Reading from the N-terminus, the 199-residue chain is uncharacterized protein (199 aa).

3 helical membrane-spanning segments follow: residues 22 to 44, 65 to 87, and 91 to 108; these read VVVV…YLFL, TGFI…HLAL, and HTIT…FFFW.

It belongs to the ycf1 family.

Its subcellular location is the mitochondrion membrane. This is an uncharacterized protein from Arabidopsis thaliana (Mouse-ear cress).